The sequence spans 596 residues: uncharacterized protein (596 aa).

The signal sequence occupies residues 1-20 (MRYKPLLLALMLVFSTPAVA). 2 stretches are compositionally biased toward basic and acidic residues: residues 25 to 90 (AHNR…KEAT) and 161 to 184 (VRSD…NAKT). The interval 25–184 (AHNRSAEVKK…KYREEKNAKT (160 aa)) is disordered. Coiled coils occupy residues 177–281 (REEK…RFVS) and 318–454 (NREV…TAED).

Belongs to the peptidase M23B family.

This is an uncharacterized protein from Neisseria meningitidis serogroup B (strain ATCC BAA-335 / MC58).